The sequence spans 303 residues: N-acetyl-D-glucosamine kinase (303 aa).

Residues 4 to 11 (GFDIGGTK) and 133 to 140 (GVGGGLIF) contribute to the ATP site. H157, C177, C179, and C184 together coordinate Zn(2+).

This sequence belongs to the ROK (NagC/XylR) family. NagK subfamily.

It carries out the reaction N-acetyl-D-glucosamine + ATP = N-acetyl-D-glucosamine 6-phosphate + ADP + H(+). The protein operates within cell wall biogenesis; peptidoglycan recycling. In terms of biological role, catalyzes the phosphorylation of N-acetyl-D-glucosamine (GlcNAc) derived from cell-wall degradation, yielding GlcNAc-6-P. This is N-acetyl-D-glucosamine kinase from Escherichia coli O9:H4 (strain HS).